The sequence spans 174 residues: Gamma-crystallin C (174 aa).

Beta/gamma crystallin 'Greek key' domains follow at residues 2-40 and 41-83; these read GKIT…RVDS and GCWM…RLIP. The residue at position 23 (Cys-23) is an S-methylcysteine. A connecting peptide region spans residues 84-87; that stretch reads HTGS. 2 consecutive Beta/gamma crystallin 'Greek key' domains span residues 88–128 and 129–171; these read HRMR…HVLE and GCWV…RRVV.

The protein belongs to the beta/gamma-crystallin family.

Functionally, crystallins are the dominant structural components of the vertebrate eye lens. This chain is Gamma-crystallin C (Crygc), found in Rattus norvegicus (Rat).